We begin with the raw amino-acid sequence, 257 residues long: TLC domain-containing protein 3A (257 aa).

Transmembrane regions (helical) follow at residues 1-21 (MLLT…LCTW), 42-62 (LVSS…IRSC), 77-97 (VWFL…CEWC), 113-135 (FLSR…VPVA), 142-162 (LGDF…FVSL), 181-201 (GILT…FMYW), and 220-240 (FYCN…FCLL). One can recognise a TLC domain in the interval 33–249 (TDCVMISTRL…LCRKAVRLFD (217 aa)).

In terms of assembly, interacts with GGT7 isoform 3 and SLC3A2. Highly expressed in pancreas. Detected at intermediate levels in heart, placenta and kidney, and at low levels in brain, liver and skeletal muscle. Not detected in normal lung.

It localises to the cell membrane. This is TLC domain-containing protein 3A from Homo sapiens (Human).